We begin with the raw amino-acid sequence, 505 residues long: Lysine--tRNA ligase (505 aa).

Residues glutamate 415 and glutamate 422 each contribute to the Mg(2+) site.

It belongs to the class-II aminoacyl-tRNA synthetase family. Homodimer. The cofactor is Mg(2+).

The protein resides in the cytoplasm. The enzyme catalyses tRNA(Lys) + L-lysine + ATP = L-lysyl-tRNA(Lys) + AMP + diphosphate. The protein is Lysine--tRNA ligase (lysS) of Salmonella typhimurium (strain LT2 / SGSC1412 / ATCC 700720).